The following is a 371-amino-acid chain: Serpentine receptor class delta-1 (371 aa).

The next 7 membrane-spanning stretches (helical) occupy residues 31-51 (LSEV…YVIF), 62-82 (AVLL…SLLA), 109-129 (CFFC…ILLI), 148-168 (MIVI…FYFW), 209-229 (IPSL…YFII), 267-287 (AIPI…FGII), and 295-315 (ITFR…FIFI). A disordered region spans residues 344-371 (EKFNQPPKQPTNPAQQSANNDAAKTEKV). Positions 354–365 (TNPAQQSANNDA) are enriched in polar residues.

Belongs to the nematode receptor-like protein srd family.

Its subcellular location is the membrane. The chain is Serpentine receptor class delta-1 (srd-1) from Caenorhabditis elegans.